A 427-amino-acid chain; its full sequence is Adenylosuccinate synthetase (427 aa).

Residues Gly12–Lys18 and Gly40–Thr42 each bind GTP. Catalysis depends on Asp13, which acts as the Proton acceptor. Positions 13 and 40 each coordinate Mg(2+). IMP-binding positions include Asp13–Lys16, Asn38–His41, Thr128, Arg142, Gln223, Thr238, and Arg302. His41 (proton donor) is an active-site residue. Substrate is bound at residue Thr298–Arg304. Residues Arg304, Ser330–Asp332, and Ser412–Gly414 each bind GTP.

Belongs to the adenylosuccinate synthetase family. As to quaternary structure, homodimer. It depends on Mg(2+) as a cofactor.

It is found in the cytoplasm. It carries out the reaction IMP + L-aspartate + GTP = N(6)-(1,2-dicarboxyethyl)-AMP + GDP + phosphate + 2 H(+). It participates in purine metabolism; AMP biosynthesis via de novo pathway; AMP from IMP: step 1/2. In terms of biological role, plays an important role in the de novo pathway of purine nucleotide biosynthesis. Catalyzes the first committed step in the biosynthesis of AMP from IMP. The sequence is that of Adenylosuccinate synthetase from Staphylococcus epidermidis (strain ATCC 35984 / DSM 28319 / BCRC 17069 / CCUG 31568 / BM 3577 / RP62A).